The sequence spans 424 residues: Gamma-glutamyl phosphate reductase (424 aa).

The protein belongs to the gamma-glutamyl phosphate reductase family.

The protein localises to the cytoplasm. It catalyses the reaction L-glutamate 5-semialdehyde + phosphate + NADP(+) = L-glutamyl 5-phosphate + NADPH + H(+). It participates in amino-acid biosynthesis; L-proline biosynthesis; L-glutamate 5-semialdehyde from L-glutamate: step 2/2. In terms of biological role, catalyzes the NADPH-dependent reduction of L-glutamate 5-phosphate into L-glutamate 5-semialdehyde and phosphate. The product spontaneously undergoes cyclization to form 1-pyrroline-5-carboxylate. In Shewanella woodyi (strain ATCC 51908 / MS32), this protein is Gamma-glutamyl phosphate reductase.